A 511-amino-acid chain; its full sequence is Intermediate cleaving peptidase 55 (511 aa).

Residues D327, D338, H417, E444, and E467 each coordinate Mn(2+).

It belongs to the peptidase M24B family. Mn(2+) is required as a cofactor.

It is found in the nucleus. The protein resides in the mitochondrion inner membrane. The catalysed reaction is The enzyme cleaves the 36-Pro-Pro-37 bond of cysteine desulfurase (EC 2.8.1.7) removing three amino acid residues (Tyr-Ser-Pro) from the N-terminus after cleavage by mitochondrial processing peptidase.. Functionally, aminopeptidase which cleaves preprotein intermediates that carry destabilizing N-ter amino acid residues after the mitochondrial processing peptidase (MPP) cleavage site and is thus critical for stabilization of the mitochondrial proteome. This chain is Intermediate cleaving peptidase 55 (ICP55), found in Saccharomyces cerevisiae (strain ATCC 204508 / S288c) (Baker's yeast).